Consider the following 845-residue polypeptide: Disintegrin and metalloproteinase domain-containing protein 9 (845 aa).

The N-terminal stretch at 1–29 is a signal peptide; it reads MGPRALSPLASLRLRWLLACGLLGPVLEA. Residues 30-697 are Extracellular-facing; sequence GRPDLEQTVH…YNAKSTALRD (668 aa). 3 N-linked (GlcNAc...) asparagine glycosylation sites follow: Asn144, Asn154, and Asn231. In terms of domain architecture, Peptidase M12B spans 212–406; it reads RYVELFIVVD…KGGSCLLNIP (195 aa). 4 cysteine pairs are disulfide-bonded: Cys322–Cys401, Cys363–Cys385, Cys365–Cys370, and Cys473–Cys493. His347 lines the Zn(2+) pocket. Residue Glu348 is part of the active site. 2 residues coordinate Zn(2+): His351 and His357. N-linked (GlcNAc...) asparagine glycosylation is found at Asn381, Asn487, and Asn636. In terms of domain architecture, Disintegrin spans 414–501; the sequence is APSCGNKLVD…FCPPDVFIQN (88 aa). Disulfide bonds link Cys644–Cys656, Cys650–Cys662, and Cys664–Cys673. One can recognise an EGF-like domain in the interval 644–698; sequence CDIQGKCHGHGVCNSNKNCHCEDGWAPPHCDTKGYGGSVDSGPTYNAKSTALRDG. The chain crosses the membrane as a helical span at residues 698-718; it reads GLLVFFFLIVPLVAAAIFLFI. Topologically, residues 719–845 are cytoplasmic; sequence KRDELRKTFR…PAPPLYSSLT (127 aa). The tract at residues 729–845 is disordered; that stretch reads KKRSQMSDGR…PAPPLYSSLT (117 aa). Positions 734–745 are enriched in polar residues; the sequence is MSDGRNQANVSR. Residues 783–794 are compositionally biased toward pro residues; it reads PGGPGVSRPPPG.

In terms of assembly, interacts with SH3GL2 and SNX9 through its cytoplasmic tail. Interacts with ITGA6. Zn(2+) is required as a cofactor. In terms of processing, proteolytically cleaved in the trans-Golgi network before it reaches the plasma membrane to generate a mature protein. The removal of the pro-domain occurs via cleavage at two different sites. Processed most likely by a pro-protein convertase such as furin, at the boundary between the pro-domain and the catalytic domain. An additional upstream cleavage pro-protein convertase site (Arg-56/Glu-57) has an important role in the activation of ADAM9. Post-translationally, phosphorylation is induced in vitro by phorbol-12-myristate-13-acetate (PMA).

Its subcellular location is the cell membrane. Its activity is regulated as follows. Synthesized as an inactive form which is proteolytically cleaved to generate an active enzyme. Processing at the upstream site is particularly important for activation of the proenzyme, whereas processing at the boundary between the pro-domain and the catalytic domain does not appear to be essential. Inhibited by hydroxamic acid-based inhibitors. Its function is as follows. Metalloprotease that cleaves and releases a number of molecules with important roles in tumorigenesis and angiogenesis, such as TEK, KDR, EPHB4, CD40, VCAM1 and CDH5. May mediate cell-cell, cell-matrix interactions and regulate the motility of cells via interactions with integrins. The polypeptide is Disintegrin and metalloproteinase domain-containing protein 9 (Mus musculus (Mouse)).